The following is a 211-amino-acid chain: Protein-lysine N-methyltransferase DDB_G0272708 (211 aa).

The protein belongs to the class I-like SAM-binding methyltransferase superfamily. EFM5 family.

It is found in the cytoplasm. S-adenosyl-L-methionine-dependent protein-lysine N-methyltransferase that methylates elongation factor 1-alpha. In Dictyostelium discoideum (Social amoeba), this protein is Protein-lysine N-methyltransferase DDB_G0272708.